Consider the following 4328-residue polypeptide: Cadherin-4 (4328 aa).

Positions 1–23 (MKKHRVFHLFLLIFCKAISLVTT) are cleaved as a signal peptide. Over 24–4072 (SSSTEQIFEF…TVLEFLLKAE (4049 aa)) the chain is Extracellular. Asn39 and Asn56 each carry an N-linked (GlcNAc...) asparagine glycan. Cadherin domains lie at 108 to 153 (PLNR…SPVF) and 156 to 275 (GEQG…NPNI). 7 N-linked (GlcNAc...) asparagine glycosylation sites follow: Asn196, Asn330, Asn339, Asn365, Asn431, Asn452, and Asn584. 11 Cadherin domains span residues 384 to 492 (DNEK…APVF), 507 to 608 (PGDV…SPVF), 609 to 720 (SSFP…SPQF), 721 to 826 (DEVS…PPKC), 827 to 934 (VVQH…AIEF), 935 to 1051 (DDVA…KPMY), 1047 to 1156 (KKPM…SPTF), 1175 to 1262 (RIFA…PPEI), 1265 to 1363 (KKSD…RPKF), 1364 to 1467 (SASH…SPYF), and 1476 to 1570 (VDES…APET). 2 N-linked (GlcNAc...) asparagine glycosylation sites follow: Asn811 and Asn899. A Cell attachment site motif is present at residues 1090–1092 (RGD). An N-linked (GlcNAc...) asparagine glycan is attached at Asn1192. The segment at 1246–1267 (NSAGQKPRKSKNSPPEISGKKS) is disordered. Asn1335 carries N-linked (GlcNAc...) asparagine glycosylation. N-linked (GlcNAc...) asparagine glycosylation is present at Asn1610. One can recognise a Cadherin 14 domain in the interval 1671–1784 (RRQVYRGTIR…IDENDEPPRF (114 aa)). N-linked (GlcNAc...) asparagine glycosylation occurs at Asn1895. The Cadherin 15 domain occupies 1917 to 1984 (FSIVNPHEAF…ENINDETPIF (68 aa)). 7 N-linked (GlcNAc...) asparagine glycosylation sites follow: Asn2059, Asn2150, Asn2216, Asn2367, Asn2413, Asn2440, and Asn2535. Cadherin domains follow at residues 2187-2285 (EKLK…MPEF) and 2286-2397 (IRSD…PPRF). Cadherin domains lie at 2429 to 2505 (LQFS…PPFF), 2506 to 2608 (VLPF…VPRF), 2609 to 2712 (SNSH…APAF), 2719 to 2813 (FTIS…PPQF), 2828 to 2915 (SPIL…CPEA), 2913 to 3011 (PEAN…RPKI), 3012 to 3113 (IEKL…APTF), 3114 to 3216 (EKST…APKF), and 3217 to 3326 (EKEK…APTF). 5 N-linked (GlcNAc...) asparagine glycosylation sites follow: Asn2844, Asn2916, Asn2941, Asn3083, and Asn3143. Asn3330 carries N-linked (GlcNAc...) asparagine glycosylation. Cadherin domains lie at 3335–3428 (VQEG…APTM) and 3429–3554 (KPMK…VDEF). Asn3512 carries an N-linked (GlcNAc...) asparagine glycan. In terms of domain architecture, EGF-like 1 spans 3706–3744 (ETNQCAKSPCEQWQLCIPSVHNSTYECVCPLGMEGDKCS). Disulfide bonds link Cys3710–Cys3721, Cys3715–Cys3732, Cys3734–Cys3743, Cys3898–Cys3925, Cys3933–Cys3944, Cys3938–Cys3954, Cys3956–Cys3965, Cys3972–Cys3983, Cys3977–Cys3992, and Cys3994–Cys4003. N-linked (GlcNAc...) asparagine glycosylation occurs at Asn3727. Residues 3757 to 3925 (EAELSVGGDG…MKLFGAQPGC (169 aa)) enclose the Laminin G-like domain. EGF-like domains lie at 3929–3966 (TSSPCNDLPCQHAGTCISQGKSHFKCECPSRYSGNVCE) and 3968–4004 (DLEPCASSPCPTGIQCIPFYNDYLCKCPNGFTGKHCE). The N-linked (GlcNAc...) asparagine glycan is linked to Asn4043. Residues 4073-4093 (IVIVILGVLLLLLVFCLTFIT) traverse the membrane as a helical segment. Residues 4094 to 4328 (WKCCKKNRDP…IDEEVNIHIS (235 aa)) lie on the Cytoplasmic side of the membrane. Disordered regions lie at residues 4143–4215 (TSSV…SSLR) and 4268–4311 (NFER…PISL). Residues 4178 to 4196 (TRRDPLPSDKFRRVDETAN) are compositionally biased toward basic and acidic residues. The Cell attachment site motif lies at 4207 to 4209 (RGD).

As to expression, in larvae and adult, it is expressed in various tissues including pharyngeal muscle, hypodermis and gonad. In the nervous system it is expressed in sensory neurons and motor neurons in the ventral cord.

It is found in the cell membrane. Potential calcium-dependent cell-adhesion protein that controls axon guidance in the ventral cord. The sequence is that of Cadherin-4 from Caenorhabditis elegans.